A 332-amino-acid polypeptide reads, in one-letter code: MKLFRILDPFTLTLITVVLLASFFPARGDFVPFFENLTTAAIALLFFMHGAKLSREAIIAGGGHWRLHLWVMCSTFVLFPILGVLFAWWKPVNVDPMLYSGFLYLCILPATVQSAIAFTSMAGGNVAAAVCSASASSLLGIFLSPLLVGLVMNVHGAGGSLEQVGKIMLQLLLPFVLGHLSRPWIGDWVSRNKKWIAKTDQTSILLVVYTAFSEAVVNGIWHKVGWGSLLFIVVVSCVLLAIVIVVNVFMARRLSFNKADEITIVFCGSKKSLANGIPMANILFPTSVIGMMVLPLMIFHQIQLMVCAVLARRYKRQTEQLQAQQESSADKA.

It belongs to the bile acid:sodium symporter (BASS) (TC 2.A.28) family.

The protein is Putative symporter YfeH (yfeH) of Escherichia coli (strain K12).